Here is a 352-residue protein sequence, read N- to C-terminus: GTPase Obg (352 aa).

Positions 1 to 159 constitute an Obg domain; it reads MSFIDEAKVF…FPIFMQLKVL (159 aa). One can recognise an OBG-type G domain in the interval 160–327; that stretch reads SDIGIIGMPN…VMLYEMLQKD (168 aa). GTP is bound by residues 166-173, 191-195, 212-215, 279-282, and 308-310; these read GMPNAGKS, FTTLE, DIPG, NKCD, and SLD. Mg(2+) is bound by residues Ser-173 and Thr-193.

This sequence belongs to the TRAFAC class OBG-HflX-like GTPase superfamily. OBG GTPase family. As to quaternary structure, monomer. It depends on Mg(2+) as a cofactor.

Its subcellular location is the cytoplasm. An essential GTPase which binds GTP, GDP and possibly (p)ppGpp with moderate affinity, with high nucleotide exchange rates and a fairly low GTP hydrolysis rate. Plays a role in control of the cell cycle, stress response, ribosome biogenesis and in those bacteria that undergo differentiation, in morphogenesis control. This Anaplasma phagocytophilum (strain HZ) protein is GTPase Obg.